A 226-amino-acid polypeptide reads, in one-letter code: ATP synthase F(0) complex subunit a (226 aa).

6 helical membrane passes run 12–32 (PTVL…LLIP), 68–88 (WSLM…LGLL), 97–117 (QLSM…AMGL), 138–158 (IPML…ALAV), 182–202 (LAIN…LTIL), and 203–223 (ETAI…LYLH).

Belongs to the ATPase A chain family. As to quaternary structure, component of the ATP synthase complex composed at least of ATP5F1A/subunit alpha, ATP5F1B/subunit beta, ATP5MC1/subunit c (homooctomer), MT-ATP6/subunit a, MT-ATP8/subunit 8, ATP5ME/subunit e, ATP5MF/subunit f, ATP5MG/subunit g, ATP5MK/subunit k, ATP5MJ/subunit j, ATP5F1C/subunit gamma, ATP5F1D/subunit delta, ATP5F1E/subunit epsilon, ATP5PF/subunit F6, ATP5PB/subunit b, ATP5PD/subunit d, ATP5PO/subunit OSCP. ATP synthase complex consists of a soluble F(1) head domain (subunits alpha(3) and beta(3)) - the catalytic core - and a membrane F(0) domain - the membrane proton channel (subunits c, a, 8, e, f, g, k and j). These two domains are linked by a central stalk (subunits gamma, delta, and epsilon) rotating inside the F1 region and a stationary peripheral stalk (subunits F6, b, d, and OSCP). Interacts with DNAJC30; interaction is direct.

It is found in the mitochondrion inner membrane. The catalysed reaction is H(+)(in) = H(+)(out). In terms of biological role, subunit a, of the mitochondrial membrane ATP synthase complex (F(1)F(0) ATP synthase or Complex V) that produces ATP from ADP in the presence of a proton gradient across the membrane which is generated by electron transport complexes of the respiratory chain. ATP synthase complex consist of a soluble F(1) head domain - the catalytic core - and a membrane F(1) domain - the membrane proton channel. These two domains are linked by a central stalk rotating inside the F(1) region and a stationary peripheral stalk. During catalysis, ATP synthesis in the catalytic domain of F(1) is coupled via a rotary mechanism of the central stalk subunits to proton translocation. With the subunit c (ATP5MC1), forms the proton-conducting channel in the F(0) domain, that contains two crucial half-channels (inlet and outlet) that facilitate proton movement from the mitochondrial intermembrane space (IMS) into the matrix. Protons are taken up via the inlet half-channel and released through the outlet half-channel, following a Grotthuss mechanism. The chain is ATP synthase F(0) complex subunit a from Pongo abelii (Sumatran orangutan).